Consider the following 906-residue polypeptide: Alanine--tRNA ligase (906 aa).

Zn(2+)-binding residues include H600, H604, C703, and H707.

The protein belongs to the class-II aminoacyl-tRNA synthetase family. As to quaternary structure, homodimer. The cofactor is Zn(2+).

It localises to the cytoplasm. The enzyme catalyses tRNA(Ala) + L-alanine + ATP = L-alanyl-tRNA(Ala) + AMP + diphosphate. Its function is as follows. Catalyzes the attachment of alanine to tRNA(Ala) in a two-step reaction: alanine is first activated by ATP to form Ala-AMP and then transferred to the acceptor end of tRNA(Ala). Incorrectly charged aminoacyl-tRNA(Ala) is also edited in situ by the editing domain. The protein is Alanine--tRNA ligase (alaS) of Archaeoglobus fulgidus (strain ATCC 49558 / DSM 4304 / JCM 9628 / NBRC 100126 / VC-16).